A 698-amino-acid polypeptide reads, in one-letter code: Protein CRAC (698 aa).

Positions 22 to 122 (DVSYSSIMKK…FLTLLIARIR (101 aa)) constitute a PH domain. The interval 594 to 630 (TGGGSVPSSQSTNNLQSSTSSMSSLSSSSTSTTKRSH) is disordered. Low complexity predominate over residues 601 to 626 (SSQSTNNLQSSTSSMSSLSSSSTSTT).

The protein resides in the cytoplasm. Its function is as follows. Couples activated G protein to adenylyl cyclase signal transduction from surface cAMP receptor. Pianissimo a cytosolic regulator and CRAC, are both essential for activation of the enzyme adenylyl cyclase. Pianissimo and CRAC do not function redundantly. Both proteins are integral components of the adenylyl cyclase activation pathway. This is Protein CRAC (dagA) from Dictyostelium discoideum (Social amoeba).